The chain runs to 593 residues: Probable translation initiation factor IF-2 (593 aa).

The tr-type G domain occupies 7–221 (IRTPIVCVMG…VLIGLAQRYM (215 aa)). Residues 16-23 (GHVDHGKT) form a G1 region. 16–23 (GHVDHGKT) is a GTP binding site. Positions 41 to 45 (EITQH) are G2. The interval 77–80 (DTPG) is G3. GTP-binding positions include 77–81 (DTPGH) and 131–134 (NKVD). Residues 131-134 (NKVD) form a G4 region. The G5 stretch occupies residues 199-201 (SAL).

This sequence belongs to the TRAFAC class translation factor GTPase superfamily. Classic translation factor GTPase family. IF-2 subfamily.

In terms of biological role, function in general translation initiation by promoting the binding of the formylmethionine-tRNA to ribosomes. Seems to function along with eIF-2. This chain is Probable translation initiation factor IF-2, found in Methanoculleus marisnigri (strain ATCC 35101 / DSM 1498 / JR1).